We begin with the raw amino-acid sequence, 515 residues long: Lysine--tRNA ligase (515 aa).

Positions 425 and 432 each coordinate Mg(2+).

This sequence belongs to the class-II aminoacyl-tRNA synthetase family. As to quaternary structure, homodimer. Mg(2+) serves as cofactor.

The protein localises to the cytoplasm. It catalyses the reaction tRNA(Lys) + L-lysine + ATP = L-lysyl-tRNA(Lys) + AMP + diphosphate. The protein is Lysine--tRNA ligase of Cupriavidus metallidurans (strain ATCC 43123 / DSM 2839 / NBRC 102507 / CH34) (Ralstonia metallidurans).